Reading from the N-terminus, the 202-residue chain is Tetranectin (202 aa).

Positions 1–21 (MELWGAYLLLCLFSLLTQVTT) are cleaved as a signal peptide. O-linked (GalNAc...) threonine glycosylation is present at Thr-25. Intrachain disulfides connect Cys-71-Cys-81, Cys-98-Cys-197, and Cys-173-Cys-189. Residues 77–198 (VHMKCFLAFT…CRDQLPYICQ (122 aa)) enclose the C-type lectin domain.

As to quaternary structure, homotrimer. Found in plasma.

The protein resides in the secreted. In terms of biological role, tetranectin binds to plasminogen and to isolated kringle 4. May be involved in the packaging of molecules destined for exocytosis. Plays a role in retinal function. The sequence is that of Tetranectin (CLEC3B) from Homo sapiens (Human).